The chain runs to 359 residues: Glycerol-3-phosphate dehydrogenase [NAD(P)+] (359 aa).

Residues Thr-11, Trp-12, Arg-32, and Lys-107 each contribute to the NADPH site. Residues Lys-107 and Gly-138 each contribute to the sn-glycerol 3-phosphate site. Ala-142 is a binding site for NADPH. Sn-glycerol 3-phosphate is bound by residues Lys-193, Asp-246, Ser-256, Arg-257, and Asn-258. Lys-193 acts as the Proton acceptor in catalysis. Arg-257 lines the NADPH pocket. Residues Val-281 and Glu-283 each coordinate NADPH.

This sequence belongs to the NAD-dependent glycerol-3-phosphate dehydrogenase family.

It is found in the cytoplasm. The catalysed reaction is sn-glycerol 3-phosphate + NAD(+) = dihydroxyacetone phosphate + NADH + H(+). It carries out the reaction sn-glycerol 3-phosphate + NADP(+) = dihydroxyacetone phosphate + NADPH + H(+). Its pathway is membrane lipid metabolism; glycerophospholipid metabolism. Its function is as follows. Catalyzes the reduction of the glycolytic intermediate dihydroxyacetone phosphate (DHAP) to sn-glycerol 3-phosphate (G3P), the key precursor for phospholipid synthesis. The protein is Glycerol-3-phosphate dehydrogenase [NAD(P)+] of Dehalococcoides mccartyi (strain CBDB1).